The primary structure comprises 116 residues: Large ribosomal subunit protein bL20 (116 aa).

This sequence belongs to the bacterial ribosomal protein bL20 family.

Functionally, binds directly to 23S ribosomal RNA and is necessary for the in vitro assembly process of the 50S ribosomal subunit. It is not involved in the protein synthesizing functions of that subunit. This is Large ribosomal subunit protein bL20 from Synechococcus elongatus (strain ATCC 33912 / PCC 7942 / FACHB-805) (Anacystis nidulans R2).